Consider the following 213-residue polypeptide: Orotate phosphoribosyltransferase (213 aa).

A 5-phospho-alpha-D-ribose 1-diphosphate-binding site is contributed by Lys-26. 34–35 is a binding site for orotate; the sequence is FF. Residues 72–73, Arg-99, Lys-100, Lys-103, His-105, and 124–132 each bind 5-phospho-alpha-D-ribose 1-diphosphate; these read YK and DDVITAGTA. 2 residues coordinate orotate: Thr-128 and Arg-156.

It belongs to the purine/pyrimidine phosphoribosyltransferase family. PyrE subfamily. In terms of assembly, homodimer. Mg(2+) serves as cofactor.

The enzyme catalyses orotidine 5'-phosphate + diphosphate = orotate + 5-phospho-alpha-D-ribose 1-diphosphate. It functions in the pathway pyrimidine metabolism; UMP biosynthesis via de novo pathway; UMP from orotate: step 1/2. Functionally, catalyzes the transfer of a ribosyl phosphate group from 5-phosphoribose 1-diphosphate to orotate, leading to the formation of orotidine monophosphate (OMP). This Haemophilus influenzae (strain ATCC 51907 / DSM 11121 / KW20 / Rd) protein is Orotate phosphoribosyltransferase.